We begin with the raw amino-acid sequence, 25 residues long: Cytochrome c oxidase polypeptide VIIc (25 aa).

Residues 1-25 (SHYSEGPGQNLPFSVQNKXRLLGMM) form a disordered region.

Belongs to the cytochrome c oxidase VIIc family. As to quaternary structure, component of the cytochrome c oxidase (complex IV, CIV), a multisubunit enzyme composed of 14 subunits. The complex is composed of a catalytic core of 3 subunits MT-CO1, MT-CO2 and MT-CO3, encoded in the mitochondrial DNA, and 11 supernumerary subunits COX4I, COX5A, COX5B, COX6A, COX6B, COX6C, COX7A, COX7B, COX7C, COX8 and NDUFA4, which are encoded in the nuclear genome. The complex exists as a monomer or a dimer and forms supercomplexes (SCs) in the inner mitochondrial membrane with NADH-ubiquinone oxidoreductase (complex I, CI) and ubiquinol-cytochrome c oxidoreductase (cytochrome b-c1 complex, complex III, CIII), resulting in different assemblies (supercomplex SCI(1)III(2)IV(1) and megacomplex MCI(2)III(2)IV(2)). Interacts with RAB5IF.

Its subcellular location is the mitochondrion inner membrane. It functions in the pathway energy metabolism; oxidative phosphorylation. Functionally, component of the cytochrome c oxidase, the last enzyme in the mitochondrial electron transport chain which drives oxidative phosphorylation. The respiratory chain contains 3 multisubunit complexes succinate dehydrogenase (complex II, CII), ubiquinol-cytochrome c oxidoreductase (cytochrome b-c1 complex, complex III, CIII) and cytochrome c oxidase (complex IV, CIV), that cooperate to transfer electrons derived from NADH and succinate to molecular oxygen, creating an electrochemical gradient over the inner membrane that drives transmembrane transport and the ATP synthase. Cytochrome c oxidase is the component of the respiratory chain that catalyzes the reduction of oxygen to water. Electrons originating from reduced cytochrome c in the intermembrane space (IMS) are transferred via the dinuclear copper A center (CU(A)) of subunit 2 and heme A of subunit 1 to the active site in subunit 1, a binuclear center (BNC) formed by heme A3 and copper B (CU(B)). The BNC reduces molecular oxygen to 2 water molecules using 4 electrons from cytochrome c in the IMS and 4 protons from the mitochondrial matrix. The sequence is that of Cytochrome c oxidase polypeptide VIIc from Oncorhynchus mykiss (Rainbow trout).